Here is a 113-residue protein sequence, read N- to C-terminus: Class I hydrophobin POH1 (113 aa).

The first 26 residues, 1–26 (MFSIRISTVVLAASALLAVAIPMTNT), serve as a signal peptide directing secretion. Cystine bridges form between C31–C93, C38–C87, C39–C74, and C94–C107.

Belongs to the fungal hydrophobin family. As to quaternary structure, self-assembles to form functional amyloid fibrils called rodlets. Self-assembly into fibrillar rodlets occurs spontaneously at hydrophobic:hydrophilic interfaces and the rodlets further associate laterally to form amphipathic monolayers. Expressed in the fruiting bodies but not in vegetative mycelium.

The protein localises to the secreted. Its subcellular location is the cell wall. Its function is as follows. Aerial growth, conidiation, and dispersal of filamentous fungi in the environment rely upon a capability of their secreting small amphipathic proteins called hydrophobins (HPBs) with low sequence identity. Class I can self-assemble into an outermost layer of rodlet bundles on aerial cell surfaces, conferring cellular hydrophobicity that supports fungal growth, development and dispersal; whereas Class II form highly ordered films at water-air interfaces through intermolecular interactions but contribute nothing to the rodlet structure. POH1 is a class I hydrophobin that is involved in the formation of mycelium knots and subsequent fruiting bodies. The sequence is that of Class I hydrophobin POH1 from Pleurotus ostreatus (Oyster mushroom).